The sequence spans 462 residues: tRNA modification GTPase MnmE (462 aa).

Residues arginine 34, glutamate 92, and lysine 131 each contribute to the (6S)-5-formyl-5,6,7,8-tetrahydrofolate site. Residues 227–386 (GLQVVIAGKP…LIDAITAHAG (160 aa)) form the TrmE-type G domain. Position 237 (asparagine 237) interacts with K(+). Residues 237 to 242 (NAGKSS), 256 to 262 (TDIAGTT), and 281 to 284 (DTAG) each bind GTP. Residue serine 241 coordinates Mg(2+). Residues threonine 256, isoleucine 258, and threonine 261 each coordinate K(+). Residue threonine 262 participates in Mg(2+) binding. Lysine 462 contacts (6S)-5-formyl-5,6,7,8-tetrahydrofolate.

The protein belongs to the TRAFAC class TrmE-Era-EngA-EngB-Septin-like GTPase superfamily. TrmE GTPase family. Homodimer. Heterotetramer of two MnmE and two MnmG subunits. The cofactor is K(+).

Its subcellular location is the cytoplasm. Functionally, exhibits a very high intrinsic GTPase hydrolysis rate. Involved in the addition of a carboxymethylaminomethyl (cmnm) group at the wobble position (U34) of certain tRNAs, forming tRNA-cmnm(5)s(2)U34. This chain is tRNA modification GTPase MnmE, found in Acinetobacter baylyi (strain ATCC 33305 / BD413 / ADP1).